The following is a 287-amino-acid chain: MSATQTAQLMDGTGHARRIVEEAAAKAAEISQRTGTAPCLATVLVGDDPASVTYVRMKRARCAKAGIRSRHIALPATTTTAELIDSLSGLSGDPEVHGILLQHPCGPHIDERAAFEAIAPAKDVDGVTMHSFAAMSFGLPGFVSCTPGGIMRLLEAYDVDLAGKHAVVVGRSAILGKPVGMLLLAKDATVTYCHSRTADLSAMVREADVVVAAVGRPRLIRGEDIKPGAVVIDAGYNPGNVGDVDFDAVLTRARLITPVPGGVGPMTIAVLLEQTVDAAANQLGVQQ.

Residues 170–172 (GRS) and serine 195 each bind NADP(+).

It belongs to the tetrahydrofolate dehydrogenase/cyclohydrolase family. As to quaternary structure, homodimer.

The enzyme catalyses (6R)-5,10-methylene-5,6,7,8-tetrahydrofolate + NADP(+) = (6R)-5,10-methenyltetrahydrofolate + NADPH. The catalysed reaction is (6R)-5,10-methenyltetrahydrofolate + H2O = (6R)-10-formyltetrahydrofolate + H(+). Its pathway is one-carbon metabolism; tetrahydrofolate interconversion. Catalyzes the oxidation of 5,10-methylenetetrahydrofolate to 5,10-methenyltetrahydrofolate and then the hydrolysis of 5,10-methenyltetrahydrofolate to 10-formyltetrahydrofolate. The protein is Bifunctional protein FolD 1 of Streptomyces avermitilis (strain ATCC 31267 / DSM 46492 / JCM 5070 / NBRC 14893 / NCIMB 12804 / NRRL 8165 / MA-4680).